Here is a 507-residue protein sequence, read N- to C-terminus: Glutamyl-tRNA(Gln) amidotransferase subunit A, mitochondrial (507 aa).

Residues lysine 79 and serine 160 each act as charge relay system in the active site. The active-site Acyl-ester intermediate is serine 184.

Belongs to the amidase family. GatA subfamily. As to quaternary structure, subunit of the heterotrimeric GatCAB amidotransferase (AdT) complex, composed of A, B and C subunits.

It localises to the mitochondrion. The enzyme catalyses L-glutamyl-tRNA(Gln) + L-glutamine + ATP + H2O = L-glutaminyl-tRNA(Gln) + L-glutamate + ADP + phosphate + H(+). Allows the formation of correctly charged Gln-tRNA(Gln) through the transamidation of misacylated Glu-tRNA(Gln) in the mitochondria. The reaction takes place in the presence of glutamine and ATP through an activated gamma-phospho-Glu-tRNA(Gln). This Drosophila pseudoobscura pseudoobscura (Fruit fly) protein is Glutamyl-tRNA(Gln) amidotransferase subunit A, mitochondrial.